The following is a 546-amino-acid chain: ATP-dependent RNA helicase DBP2 (546 aa).

The tract at residues 1 to 56 is disordered; that stretch reads MTYGGRDQQYNKTNYKSRGGDFRGGRNSDRNSYNDRPQGGNYRGGFGGRSNYNQPQ. Omega-N-methylarginine is present on residues arginine 18 and arginine 43. Basic and acidic residues predominate over residues 18 to 33; that stretch reads RGGDFRGGRNSDRNSY. 2 positions are modified to phosphoserine: serine 88 and serine 90. A Q motif motif is present at residues 113-141; sequence TTFDEAGFPDYVLNEVKAEGFDKPTGIQC. Positions 144 to 319 constitute a Helicase ATP-binding domain; sequence WPMALSGRDM…ADYLNDPIQV (176 aa). ATP is bound at residue 157–164; sequence AATGSGKT. Residues 267–270 carry the DEAD box motif; sequence DEAD. The Helicase C-terminal domain occupies 347–494; sequence RLNKYLETAS…NIPPELLKYD (148 aa). Residue lysine 474 forms a Glycyl lysine isopeptide (Lys-Gly) (interchain with G-Cter in ubiquitin) linkage. A disordered region spans residues 493–546; that stretch reads YDRRSYGGGHPRYGGGRGGRGGYGRRGGYGGGRGGYGGNRQRDGGWGNRGRSNY. A compositionally biased stretch (gly residues) spans 498 to 540; the sequence is YGGGHPRYGGGRGGRGGYGRRGGYGGGRGGYGGNRQRDGGWGN. The RNA-binding RGG-box stretch occupies residues 505–530; it reads YGGGRGGRGGYGRRGGYGGGRGGYGG. Dimethylated arginine; alternate occurs at positions 509, 512, 518, and 525. Omega-N-methylarginine; alternate is present on residues arginine 509, arginine 512, arginine 518, and arginine 525.

It belongs to the DEAD box helicase family. DDX5/DBP2 subfamily. Interacts with UPF1. Associates with polysomes.

The protein resides in the cytoplasm. Its subcellular location is the nucleus. The catalysed reaction is ATP + H2O = ADP + phosphate + H(+). Its function is as follows. ATP-dependent RNA helicase involved nonsense-mediated mRNA decay and ribosome biogenesis through rRNA processing. Associates directly with chromatin, correlating with transcriptional activity. Required for assembly of mRNA-binding proteins YRA1, NAB2, and MEX67 onto poly(A)+ RNA. This is ATP-dependent RNA helicase DBP2 from Saccharomyces cerevisiae (strain ATCC 204508 / S288c) (Baker's yeast).